A 446-amino-acid chain; its full sequence is Forkhead box protein F2 (446 aa).

The span at 1-18 (MSTEGGPPPPPPRPPPAP) shows a compositional bias: pro residues. The disordered stretch occupies residues 1-97 (MSTEGGPPPP…TKKATSGLRR (97 aa)). Residues 45–78 (STSSSSSSSSASCASSSSNSVSASAGACKSAASS) show a composition bias toward low complexity. A DNA-binding region (fork-head) is located at residues 100-194 (KPPYSYIALI…EEGSFRRRPR (95 aa)). 3 disordered regions span residues 257-278 (AGAP…HMSP), 304-325 (GGGG…SPAM), and 340-371 (AHWS…GLHP). Basic residues predominate over residues 263–274 (AHPHHLHHHHVP). The segment covering 311–325 (GPDSSSSPVPSSPAM) has biased composition (low complexity).

Interacts with the transcription factors TBP and TFIIB. In terms of tissue distribution, uniquely expressed in the bronchiolar epithelium and in type II pneumocytes.

The protein resides in the nucleus. In terms of biological role, probable transcription activator for a number of lung-specific genes. Mediates up-regulation of the E3 ligase IRF2BPL and drives ubiquitination and degradation of CTNNB1. This Mus musculus (Mouse) protein is Forkhead box protein F2 (Foxf2).